The following is a 513-amino-acid chain: Maturase K (513 aa).

Belongs to the intron maturase 2 family. MatK subfamily.

The protein resides in the plastid. Its subcellular location is the chloroplast. Its function is as follows. Usually encoded in the trnK tRNA gene intron. Probably assists in splicing its own and other chloroplast group II introns. In Sporobolus michauxianus (Prairie cordgrass), this protein is Maturase K.